The chain runs to 139 residues: Peptide methionine sulfoxide reductase B4 (139 aa).

N-acetylalanine is present on alanine 2. Positions 12–133 (EEEWRAVLSP…NSVSINFNPA (122 aa)) constitute a MsrB domain. The Zn(2+) site is built by cysteine 51, cysteine 54, cysteine 97, and cysteine 100. Residues cysteine 69 and cysteine 122 are joined by a disulfide bond. Cysteine 122 functions as the Nucleophile in the catalytic mechanism.

It belongs to the MsrB Met sulfoxide reductase family. It depends on Zn(2+) as a cofactor.

It localises to the cytoplasm. The protein resides in the cytosol. The enzyme catalyses L-methionyl-[protein] + [thioredoxin]-disulfide + H2O = L-methionyl-(R)-S-oxide-[protein] + [thioredoxin]-dithiol. Functionally, catalyzes the reduction of methionine sulfoxide (MetSO) to methionine in proteins. Plays a protective role against oxidative stress by restoring activity to proteins that have been inactivated by methionine oxidation. MSRB family specifically reduces the MetSO R-enantiomer. In Arabidopsis thaliana (Mouse-ear cress), this protein is Peptide methionine sulfoxide reductase B4 (MSRB4).